The primary structure comprises 246 residues: Ribosomal RNA large subunit methyltransferase E (246 aa).

Residues Gly-81, Trp-83, Asp-104, Asp-120, and Asp-144 each coordinate S-adenosyl-L-methionine. Residue Lys-184 is the Proton acceptor of the active site.

This sequence belongs to the class I-like SAM-binding methyltransferase superfamily. RNA methyltransferase RlmE family.

It is found in the cytoplasm. It carries out the reaction uridine(2552) in 23S rRNA + S-adenosyl-L-methionine = 2'-O-methyluridine(2552) in 23S rRNA + S-adenosyl-L-homocysteine + H(+). Functionally, specifically methylates the uridine in position 2552 of 23S rRNA at the 2'-O position of the ribose in the fully assembled 50S ribosomal subunit. The chain is Ribosomal RNA large subunit methyltransferase E from Agrobacterium fabrum (strain C58 / ATCC 33970) (Agrobacterium tumefaciens (strain C58)).